The following is a 352-amino-acid chain: Ion-translocating oxidoreductase complex subunit D (352 aa).

Helical transmembrane passes span 20 to 40 (IMLL…WFFG), 42 to 62 (GTLV…ALVL), 78 to 109 (ALLT…VIIA), 123 to 143 (PAMI…TSWL), and 148 to 168 (IAVN…GHTA). Residue Thr187 is modified to FMN phosphoryl threonine. A run of 5 helical transmembrane segments spans residues 214 to 234 (ILAG…GVWL), 242 to 262 (WHIP…GWLF), 267 to 287 (LAAP…FFIL), 301 to 321 (LIFG…GGYP), and 322 to 342 (DGVA…DYYT).

It belongs to the NqrB/RnfD family. As to quaternary structure, the complex is composed of six subunits: RsxA, RsxB, RsxC, RsxD, RsxE and RsxG. FMN is required as a cofactor.

It is found in the cell inner membrane. Functionally, part of a membrane-bound complex that couples electron transfer with translocation of ions across the membrane. Required to maintain the reduced state of SoxR. The chain is Ion-translocating oxidoreductase complex subunit D from Escherichia coli O139:H28 (strain E24377A / ETEC).